The sequence spans 943 residues: Mechanosensitive ion channel protein BA (943 aa).

The segment at 1–67 (MPNPNDVTID…PPSSSLGFGH (67 aa)) is disordered. Residues 1–107 (MPNPNDVTID…AVLNFSTVTR (107 aa)) lie on the Cytoplasmic side of the membrane. A compositionally biased stretch (polar residues) spans 14–37 (TSVSSRGQTGARNNSTNIPNSPSG). A helical transmembrane segment spans residues 108-130 (YLIYIAPLAALLAIPIIVGATAA). Residues 131–149 (EDAKIGGVSLPWFFCWVEV) lie on the Lumenal side of the membrane. A helical transmembrane segment spans residues 150-175 (VWVSLWVCKLVAKVIPFVFQFVCGIV). Topologically, residues 176-195 (SAGTRKYALILRNLEIPITM) are cytoplasmic. Residues 196 to 214 (VLWMIVSLVTFLPIMVYNP) traverse the membrane as a helical segment. At 215 to 233 (RNKREGDTETKSWEKSVKN) the chain is on the lumenal side. A helical transmembrane segment spans residues 234 to 259 (VLFAFLVCALIFLGEKTLVQLISISY). The Cytoplasmic portion of the chain corresponds to 260 to 468 (HRKQFDARIK…DQAIHVLDNL (209 aa)). The 36-residue stretch at 412–447 (GKEAEAEECFTMLDRDGNGDISLDEIILAISEIGRT) folds into the EF-hand domain. Positions 425, 427, 429, 431, and 436 each coordinate Ca(2+). The chain crosses the membrane as a helical span at residues 469 to 489 (LATIAFIIAVLVFVSFVTSGF). The Lumenal segment spans residues 490–502 (GTVIAAGATSLLS). A helical transmembrane segment spans residues 503 to 523 (LSFVFATTAQEVLGSCIFLFV). Over 524 to 943 (KHPFDIGDRV…QRRNYESRRL (420 aa)) the chain is Cytoplasmic. The disordered stretch occupies residues 677–943 (PGAAAEDAAA…QRRNYESRRL (267 aa)). Low complexity-rich tracts occupy residues 678 to 687 (GAAAEDAAAA) and 744 to 759 (GASA…AGSA). Polar residues predominate over residues 760–781 (YSETTLNNTVSEPYQRSFTPNT). Residues 798-810 (TERHLGVSHDSIA) show a composition bias toward basic and acidic residues. The span at 827-842 (TTANQSLASPTTMQSE) shows a compositional bias: polar residues. Over residues 857-880 (PSSSQYSQQYPQQQSQSPYSYTYS) the composition is skewed to low complexity. Residues 886–904 (PESSLQPLEHTTSYNQSLP) are compositionally biased toward polar residues. Basic and acidic residues predominate over residues 916 to 943 (NSLEGHSPHVDPRHMTEEQRRNYESRRL).

It belongs to the MscS (TC 1.A.23) family.

Its subcellular location is the cell membrane. It carries out the reaction Ca(2+)(in) = Ca(2+)(out). In terms of biological role, acts as a mechanosensitive calcium channel in response to membrane stretch. Regulates intracellular calcium levels and cell volume for survival in response to hypo-osmotic shock. Involved in maintaining vacuole integrity and protecting the nuclear envelope upon hypo-osmotic shock. seems to contribute to CaCl2 toxicityIn contracstz to mscA, mscB seems to contribute to CaCl(2) toxicity. The chain is Mechanosensitive ion channel protein BA from Emericella nidulans (strain FGSC A4 / ATCC 38163 / CBS 112.46 / NRRL 194 / M139) (Aspergillus nidulans).